A 166-amino-acid chain; its full sequence is Protein FAM163B (166 aa).

Residues 6–26 (VVITGGILATVILLCIIAVLC) form a helical membrane-spanning segment. Ser40 carries the post-translational modification Phosphoserine.

It belongs to the FAM163 family.

The protein localises to the membrane. In Homo sapiens (Human), this protein is Protein FAM163B (FAM163B).